Here is a 224-residue protein sequence, read N- to C-terminus: 4'-phosphopantetheinyl transferase ffp (224 aa).

Mg(2+)-binding residues include Asp107, Glu109, and Glu151. A peptidyl carrier protein binding region spans residues 158-189; sequence GKGLSLPLDSFSVRLHEDGRVSVELPEHHTPC.

The protein belongs to the P-Pant transferase superfamily. Gsp/Sfp/HetI/AcpT family. Requires Mg(2+) as cofactor.

The enzyme catalyses apo-[peptidyl-carrier protein] + CoA = holo-[peptidyl-carrier protein] + adenosine 3',5'-bisphosphate + H(+). Functionally, may activate the peptidyl carrier protein (PCP) domains of fengycin synthase by transferring the 4'-phosphopantetheinyl moiety of coenzyme A (CoA) to a serine residue. This Bacillus subtilis protein is 4'-phosphopantetheinyl transferase ffp (ffp).